The chain runs to 29 residues: Cytolysin Uc-1 (29 aa).

Polar residues predominate over residues 1–15; the sequence is DEQTGSKGPNENLPS. Residues 1–29 form a disordered region; sequence DEQTGSKGPNENLPSQKDLXAKASXLTEV.

Its subcellular location is the secreted. It is found in the nematocyst. The protein localises to the target cell membrane. Functionally, pore-forming toxin that lyses bovine erythrocytes at nanomolar concentrations. Is devoid of enzymatic activity. Binds to monolayers and efficiently permeabilizes small lipid vesicles composed of sphingomyelin and cholesterol. The cytolytic activity is not prevented by cholesterol or sphingomyelin. The protein is Cytolysin Uc-1 of Urticina crassicornis (Mottled anemone).